A 484-amino-acid chain; its full sequence is Ribonuclease Y (484 aa).

Residues 18-38 (FFAFLFLIIIAFNLCLFAYLY) form a helical membrane-spanning segment. Residues 166–234 (SPSFLISESD…LTVRNILMND (69 aa)) enclose the KH domain. One can recognise an HD domain in the interval 293–385 (VLSHSLETAF…TQIADKLSAA (93 aa)).

This sequence belongs to the RNase Y family.

It is found in the cell membrane. Its function is as follows. Endoribonuclease that initiates mRNA decay. This chain is Ribonuclease Y, found in Mycoplasma genitalium (strain ATCC 33530 / DSM 19775 / NCTC 10195 / G37) (Mycoplasmoides genitalium).